The following is a 427-amino-acid chain: ATP synthase subunit beta (427 aa).

Gly160–Thr167 lines the ATP pocket.

Belongs to the ATPase alpha/beta chains family. As to quaternary structure, F-type ATPases have 2 components, CF(1) - the catalytic core - and CF(0) - the membrane proton channel. CF(1) has five subunits: alpha(3), beta(3), gamma(1), delta(1), epsilon(1). CF(0) has three main subunits: a(1), b(2) and c(9-12). The alpha and beta chains form an alternating ring which encloses part of the gamma chain. CF(1) is attached to CF(0) by a central stalk formed by the gamma and epsilon chains, while a peripheral stalk is formed by the delta and b chains.

The protein resides in the cell membrane. The enzyme catalyses ATP + H2O + 4 H(+)(in) = ADP + phosphate + 5 H(+)(out). Its function is as follows. Produces ATP from ADP in the presence of a proton gradient across the membrane. The catalytic sites are hosted primarily by the beta subunits. The chain is ATP synthase subunit beta from Peptococcus niger.